We begin with the raw amino-acid sequence, 279 residues long: Putative biopolymer transport protein ExbB homolog (279 aa).

A run of 3 helical transmembrane segments spans residues 19–39, 126–146, and 162–182; these read SGGVITYLIAAIGIYGFITAL, IIEVAPMLGLIGTVIGIWYTF, and IYVALITTILGLAVAIILMPL.

The protein belongs to the ExbB/TolQ family.

The protein localises to the cell membrane. The chain is Putative biopolymer transport protein ExbB homolog from Methanothermobacter thermautotrophicus (strain ATCC 29096 / DSM 1053 / JCM 10044 / NBRC 100330 / Delta H) (Methanobacterium thermoautotrophicum).